A 261-amino-acid polypeptide reads, in one-letter code: Lytic polysaccharide monooxygenase-like protein X325 (261 aa).

An N-terminal signal peptide occupies residues 1–17 (MQLSALALATLLATANA). Residues His-18, His-64, and Asp-133 each contribute to the Cu(2+) site. 2 cysteine pairs are disulfide-bonded: Cys-39–Cys-139 and Cys-108–Cys-155. N-linked (GlcNAc...) asparagine glycosylation is found at Asn-157 and Asn-183. The tract at residues 174 to 210 (LAENTQGSGNSSGHAHGSSGSGSASASKTDSKSSAAS) is disordered. A compositionally biased stretch (low complexity) spans 180 to 210 (GSGNSSGHAHGSSGSGSASASKTDSKSSAAS). A lipid anchor (GPI-anchor amidated asparagine) is attached at Asn-238. Positions 239–261 (SGSLAYVNGALAIGGVVAAALLI) are cleaved as a propeptide — removed in mature form.

Belongs to the X325 family. Cu(2+) serves as cofactor.

The protein resides in the cell membrane. Its function is as follows. Lytic polysaccharide monooxygenase-like protein that has diverged to biological functions other than polysaccharide degradation since it does not perform oxidative cleavage of polysaccharides. Acts as a cell surface-bound protein that functions in the copper-accumulation pathway. This Yarrowia lipolytica (strain CLIB 122 / E 150) (Yeast) protein is Lytic polysaccharide monooxygenase-like protein X325.